Consider the following 547-residue polypeptide: Putative cysteine ligase BshC (547 aa).

Positions 461 to 504 form a coiled coil; the sequence is ASTEATRSAIMDEMEALKQKVVRAEKRQQDEVRAQLKKAHTNLR.

The protein belongs to the BshC family.

In Salinibacter ruber (strain DSM 13855 / M31), this protein is Putative cysteine ligase BshC.